Here is a 309-residue protein sequence, read N- to C-terminus: 4-hydroxy-3-methylbut-2-enyl diphosphate reductase (309 aa).

Cys12 serves as a coordination point for [4Fe-4S] cluster. His43 and His77 together coordinate (2E)-4-hydroxy-3-methylbut-2-enyl diphosphate. Residues His43 and His77 each contribute to the dimethylallyl diphosphate site. His43 and His77 together coordinate isopentenyl diphosphate. Cys99 contacts [4Fe-4S] cluster. His127 contributes to the (2E)-4-hydroxy-3-methylbut-2-enyl diphosphate binding site. His127 provides a ligand contact to dimethylallyl diphosphate. His127 is a binding site for isopentenyl diphosphate. Residue Glu129 is the Proton donor of the active site. Thr167 contacts (2E)-4-hydroxy-3-methylbut-2-enyl diphosphate. Cys197 is a binding site for [4Fe-4S] cluster. (2E)-4-hydroxy-3-methylbut-2-enyl diphosphate contacts are provided by Ser225, Ser226, Asn227, and Ser269. Residues Ser225, Ser226, Asn227, and Ser269 each coordinate dimethylallyl diphosphate. Residues Ser225, Ser226, Asn227, and Ser269 each contribute to the isopentenyl diphosphate site.

This sequence belongs to the IspH family. [4Fe-4S] cluster serves as cofactor.

The catalysed reaction is isopentenyl diphosphate + 2 oxidized [2Fe-2S]-[ferredoxin] + H2O = (2E)-4-hydroxy-3-methylbut-2-enyl diphosphate + 2 reduced [2Fe-2S]-[ferredoxin] + 2 H(+). It catalyses the reaction dimethylallyl diphosphate + 2 oxidized [2Fe-2S]-[ferredoxin] + H2O = (2E)-4-hydroxy-3-methylbut-2-enyl diphosphate + 2 reduced [2Fe-2S]-[ferredoxin] + 2 H(+). It participates in isoprenoid biosynthesis; dimethylallyl diphosphate biosynthesis; dimethylallyl diphosphate from (2E)-4-hydroxy-3-methylbutenyl diphosphate: step 1/1. The protein operates within isoprenoid biosynthesis; isopentenyl diphosphate biosynthesis via DXP pathway; isopentenyl diphosphate from 1-deoxy-D-xylulose 5-phosphate: step 6/6. Its function is as follows. Catalyzes the conversion of 1-hydroxy-2-methyl-2-(E)-butenyl 4-diphosphate (HMBPP) into a mixture of isopentenyl diphosphate (IPP) and dimethylallyl diphosphate (DMAPP). Acts in the terminal step of the DOXP/MEP pathway for isoprenoid precursor biosynthesis. This chain is 4-hydroxy-3-methylbut-2-enyl diphosphate reductase, found in Wolbachia sp. subsp. Brugia malayi (strain TRS).